Consider the following 348-residue polypeptide: Ileal sodium/bile acid cotransporter (348 aa).

At 1–28 the chain is on the extracellular side; that stretch reads MNDPNSCVDNATVCSGASCVVPESNFNN. N-linked (GlcNAc...) asparagine glycosylation is present at asparagine 10. A helical transmembrane segment spans residues 29 to 49; that stretch reads ILSVVLSTVLTILLALVMFSM. Topologically, residues 50–82 are cytoplasmic; it reads GCNVEIKKFLGHIKRPWGICVGFLCQFGIMPLT. The chain crosses the membrane as a helical span at residues 83 to 103; the sequence is GFILSVAFDILPLQAVVVLII. Topologically, residues 104 to 126 are extracellular; the sequence is GCCPGGTASNILAYWVDGDMDLS. Residues 127–147 form a helical membrane-spanning segment; the sequence is VSMTTCSTLLALGMMPLCLLI. Residues 148–157 lie on the Cytoplasmic side of the membrane; it reads YTKMWVDSGS. A helical membrane pass occupies residues 158 to 178; sequence IVIPYDNIGTSLVSLVVPVSI. Residues 179–195 are Extracellular-facing; that stretch reads GMFVNHKWPQKAKIILK. Residues 196–216 traverse the membrane as a helical segment; sequence IGSIAGAILIVLIAVVGGILY. At 217 to 224 the chain is on the cytoplasmic side; it reads QSAWIIAP. Residues 225–245 traverse the membrane as a helical segment; the sequence is KLWIIGTIFPVAGYSLGFLLA. Residues 246 to 284 lie on the Extracellular side of the membrane; that stretch reads RIAGLPWYRCRTVAFETGMQNTQLCSTIVQLSFTPEELN. A helical transmembrane segment spans residues 285–305; it reads VVFTFPLIYSIFQLAFAAIFL. At 306–348 the chain is on the cytoplasmic side; it reads GFYVAYKKCHGKNKAEIPESKENGTEPESSFYKANGGFQPDEK. Basic and acidic residues predominate over residues 320–329; sequence AEIPESKENG. A disordered region spans residues 320–348; sequence AEIPESKENGTEPESSFYKANGGFQPDEK. Phosphoserine is present on serine 335.

It belongs to the bile acid:sodium symporter (BASS) (TC 2.A.28) family. In terms of assembly, monomer and homodimer. Mainly expressed in ileum and kidney, lower expression in cecum.

It localises to the membrane. It catalyses the reaction taurocholate(out) + 2 Na(+)(out) = taurocholate(in) + 2 Na(+)(in). It carries out the reaction cholate(out) + 2 Na(+)(out) = cholate(in) + 2 Na(+)(in). The enzyme catalyses taurochenodeoxycholate(out) + 2 Na(+)(out) = taurochenodeoxycholate(in) + 2 Na(+)(in). The catalysed reaction is tauroursodeoxycholate(out) + 2 Na(+)(out) = tauroursodeoxycholate(in) + 2 Na(+)(in). It catalyses the reaction glycocholate(out) + 2 Na(+)(out) = glycocholate(in) + 2 Na(+)(in). It carries out the reaction tauronorcholate(out) + 2 Na(+)(out) = tauronorcholate(in) + 2 Na(+)(in). The enzyme catalyses tauroallocholate(out) + 2 Na(+)(out) = tauroallocholate(in) + 2 Na(+)(in). The catalysed reaction is taurodeoxycholate(out) + 2 Na(+)(out) = taurodeoxycholate(in) + 2 Na(+)(in). It catalyses the reaction tauro-beta-muricholate(out) + 2 Na(+)(out) = tauro-beta-muricholate(in) + 2 Na(+)(in). Plays a critical role in the sodium-dependent reabsorption of bile acids from the lumen of the small intestine. Transports various bile acids, unconjugated or conjugated, such as cholate and taurocholate. Also responsible for bile acid transport in the renal proximal tubules, a salvage mechanism that helps conserve bile acids. Works collaboratively with the Na(+)-taurocholate cotransporting polypeptide (NTCP), the organic solute transporter (OST), and the bile salt export pump (BSEP), to ensure efficacious biological recycling of bile acids during enterohepatic circulation. The chain is Ileal sodium/bile acid cotransporter (SLC10A2) from Homo sapiens (Human).